The primary structure comprises 273 residues: Ribosomal RNA small subunit methyltransferase A (273 aa).

Positions 18, 20, 45, 66, 91, and 113 each coordinate S-adenosyl-L-methionine.

This sequence belongs to the class I-like SAM-binding methyltransferase superfamily. rRNA adenine N(6)-methyltransferase family. RsmA subfamily.

It localises to the cytoplasm. It carries out the reaction adenosine(1518)/adenosine(1519) in 16S rRNA + 4 S-adenosyl-L-methionine = N(6)-dimethyladenosine(1518)/N(6)-dimethyladenosine(1519) in 16S rRNA + 4 S-adenosyl-L-homocysteine + 4 H(+). Specifically dimethylates two adjacent adenosines (A1518 and A1519) in the loop of a conserved hairpin near the 3'-end of 16S rRNA in the 30S particle. May play a critical role in biogenesis of 30S subunits. This chain is Ribosomal RNA small subunit methyltransferase A, found in Salmonella typhimurium (strain LT2 / SGSC1412 / ATCC 700720).